The following is a 269-amino-acid chain: 4-hydroxy-tetrahydrodipicolinate reductase (269 aa).

NAD(+) is bound by residues 11-16 (GGSGRM) and E37. R38 contacts NADP(+). NAD(+)-binding positions include 101 to 103 (GTT) and 125 to 128 (AGNM). Catalysis depends on H158, which acts as the Proton donor/acceptor. A (S)-2,3,4,5-tetrahydrodipicolinate-binding site is contributed by H159. K162 acts as the Proton donor in catalysis. 168–169 (GT) contributes to the (S)-2,3,4,5-tetrahydrodipicolinate binding site.

The protein belongs to the DapB family.

The protein localises to the cytoplasm. It carries out the reaction (S)-2,3,4,5-tetrahydrodipicolinate + NAD(+) + H2O = (2S,4S)-4-hydroxy-2,3,4,5-tetrahydrodipicolinate + NADH + H(+). It catalyses the reaction (S)-2,3,4,5-tetrahydrodipicolinate + NADP(+) + H2O = (2S,4S)-4-hydroxy-2,3,4,5-tetrahydrodipicolinate + NADPH + H(+). It participates in amino-acid biosynthesis; L-lysine biosynthesis via DAP pathway; (S)-tetrahydrodipicolinate from L-aspartate: step 4/4. In terms of biological role, catalyzes the conversion of 4-hydroxy-tetrahydrodipicolinate (HTPA) to tetrahydrodipicolinate. The polypeptide is 4-hydroxy-tetrahydrodipicolinate reductase (Dinoroseobacter shibae (strain DSM 16493 / NCIMB 14021 / DFL 12)).